The chain runs to 155 residues: UPF0178 protein RHE_CH02229 (155 aa).

The protein belongs to the UPF0178 family.

The protein is UPF0178 protein RHE_CH02229 of Rhizobium etli (strain ATCC 51251 / DSM 11541 / JCM 21823 / NBRC 15573 / CFN 42).